The chain runs to 122 residues: Large ribosomal subunit protein uL14 (122 aa).

It belongs to the universal ribosomal protein uL14 family. In terms of assembly, part of the 50S ribosomal subunit. Forms a cluster with proteins L3 and L19. In the 70S ribosome, L14 and L19 interact and together make contacts with the 16S rRNA in bridges B5 and B8.

Binds to 23S rRNA. Forms part of two intersubunit bridges in the 70S ribosome. This is Large ribosomal subunit protein uL14 from Kocuria rhizophila (strain ATCC 9341 / DSM 348 / NBRC 103217 / DC2201).